The following is a 501-amino-acid chain: Putative lon protease homolog (501 aa).

Position 53 to 60 (53 to 60 (GPPGIGKS)) interacts with ATP. A compositionally biased stretch (polar residues) spans 481 to 494 (SSSQRMSQHGYSSE). Residues 481–501 (SSSQRMSQHGYSSENIDRSYM) form a disordered region.

This sequence belongs to the peptidase S16 family.

This is Putative lon protease homolog from Methanothermobacter thermautotrophicus (strain ATCC 29096 / DSM 1053 / JCM 10044 / NBRC 100330 / Delta H) (Methanobacterium thermoautotrophicum).